Here is a 329-residue protein sequence, read N- to C-terminus: Taste receptor type 2 member 134 (329 aa).

At 1–27 (MRCSLRGCVQGRGGKSGVSLSKFSPKK) the chain is on the extracellular side. A helical transmembrane segment spans residues 28 to 48 (MSFFFIFMVIFCIQSLVALLQ). Over 49–68 (NGFLATVLGREWVRSQGLPA) the chain is Cytoplasmic. A helical membrane pass occupies residues 69-89 (GDMIVACLAASRFCLHGVAIV). Residues 90 to 121 (NNFLTFVKLWSQKIYFSVLWDFVNTVNFWCTT) are Extracellular-facing. The chain crosses the membrane as a helical span at residues 122-142 (WLAIFYCVKISSFSHPIFFWI). Residues 143 to 153 (KWRISRSVPRL) lie on the Cytoplasmic side of the membrane. The helical transmembrane segment at 154–174 (LLGSLVIGGLSAVSSATGNTI) threads the bilayer. Over 175–201 (AFQMTACENYTLAYRTRAFYAYYFRCH) the chain is Extracellular. An N-linked (GlcNAc...) asparagine glycan is attached at asparagine 183. Residues 202–222 (AMLMWIIPFFLFLLSVILLMF) traverse the membrane as a helical segment. Residues 223-251 (SLYRHLEHMRYRRPWSHDYSTQAHTMALK) lie on the Cytoplasmic side of the membrane. Residues 252 to 272 (SLAFFLVFYTSYVLFLVISVT) form a helical membrane-spanning segment. The Extracellular segment spans residues 273–282 (RVVNVHSSWH). Residues 283–303 (WAWEVITYMGILLHSTILTLS) form a helical membrane-spanning segment. At 304–329 (NPKMRKALKIKFPDLCVARSQDKRRG) the chain is on the cytoplasmic side.

The protein belongs to the G-protein coupled receptor T2R family. Expressed in tongue and gastrointestinal tract.

The protein localises to the membrane. In terms of biological role, putative taste receptor which may play a role in the perception of bitterness. The polypeptide is Taste receptor type 2 member 134 (Rattus norvegicus (Rat)).